The chain runs to 659 residues: mRNA export factor ICP27 homolog (659 aa).

Zn(2+) is bound by residues cysteine 130, histidine 266, cysteine 268, and cysteine 273. The CHC2-type zinc-finger motif lies at 130–273 (CMMSNGERPP…CEHACNDNAC (144 aa)). Residues 317 to 659 (GSFDDSRSAT…GEDGESDMTL (343 aa)) form a disordered region. Over residues 324–336 (SATSGDGSSCSSA) the composition is skewed to low complexity. Residues 354 to 365 (SDQTDTSNNGTV) show a composition bias toward polar residues. The span at 387 to 397 (SPLDRPNDYHY) shows a compositional bias: basic and acidic residues. The span at 413–427 (GSGSSSTEAVSTASA) shows a compositional bias: low complexity. Positions 483–499 (SPERRSSEERSSSDQRR) are enriched in basic and acidic residues. Residues 503–513 (LSRSASATSGG) are compositionally biased toward polar residues. Over residues 553–575 (SRSNTPPSSPSKPDSAPAASASP) the composition is skewed to low complexity. Over residues 598–610 (ESVRVSERFETGD) the composition is skewed to basic and acidic residues. 2 stretches are compositionally biased toward acidic residues: residues 617–628 (ETEDESDDEDDQ) and 646–659 (SETD…DMTL).

The protein belongs to the HHV-1 ICP27 protein family.

It is found in the virion tegument. The protein localises to the virion. The protein resides in the host nucleus. Its subcellular location is the host cytoplasm. Functionally, immediate early (EI) protein that plays many roles during productive infection including regulation of viral gene expression and nuclear export of intronless viral RNAs. The chain is mRNA export factor ICP27 homolog from Elephantid herpesvirus 1 (isolate Asian elephant/Berlin/Kiba/1998) (EIHV-1).